A 152-amino-acid polypeptide reads, in one-letter code: Putative RRN3-like protein RRN3P1 (152 aa).

Belongs to the RRN3 family.

This Homo sapiens (Human) protein is Putative RRN3-like protein RRN3P1 (RRN3P1).